Reading from the N-terminus, the 602-residue chain is Proline--tRNA ligase (602 aa).

Belongs to the class-II aminoacyl-tRNA synthetase family. ProS type 1 subfamily. As to quaternary structure, homodimer.

The protein resides in the cytoplasm. It carries out the reaction tRNA(Pro) + L-proline + ATP = L-prolyl-tRNA(Pro) + AMP + diphosphate. Its function is as follows. Catalyzes the attachment of proline to tRNA(Pro) in a two-step reaction: proline is first activated by ATP to form Pro-AMP and then transferred to the acceptor end of tRNA(Pro). As ProRS can inadvertently accommodate and process non-cognate amino acids such as alanine and cysteine, to avoid such errors it has two additional distinct editing activities against alanine. One activity is designated as 'pretransfer' editing and involves the tRNA(Pro)-independent hydrolysis of activated Ala-AMP. The other activity is designated 'posttransfer' editing and involves deacylation of mischarged Ala-tRNA(Pro). The misacylated Cys-tRNA(Pro) is not edited by ProRS. The sequence is that of Proline--tRNA ligase from Thermosynechococcus vestitus (strain NIES-2133 / IAM M-273 / BP-1).